The following is a 241-amino-acid chain: Leucyl/phenylalanyl-tRNA--protein transferase (241 aa).

This sequence belongs to the L/F-transferase family.

It is found in the cytoplasm. The catalysed reaction is N-terminal L-lysyl-[protein] + L-leucyl-tRNA(Leu) = N-terminal L-leucyl-L-lysyl-[protein] + tRNA(Leu) + H(+). The enzyme catalyses N-terminal L-arginyl-[protein] + L-leucyl-tRNA(Leu) = N-terminal L-leucyl-L-arginyl-[protein] + tRNA(Leu) + H(+). It carries out the reaction L-phenylalanyl-tRNA(Phe) + an N-terminal L-alpha-aminoacyl-[protein] = an N-terminal L-phenylalanyl-L-alpha-aminoacyl-[protein] + tRNA(Phe). Functionally, functions in the N-end rule pathway of protein degradation where it conjugates Leu, Phe and, less efficiently, Met from aminoacyl-tRNAs to the N-termini of proteins containing an N-terminal arginine or lysine. The polypeptide is Leucyl/phenylalanyl-tRNA--protein transferase (Neisseria meningitidis serogroup B (strain ATCC BAA-335 / MC58)).